A 378-amino-acid chain; its full sequence is uncharacterized protein (378 aa).

Positions 150–176 (TTTATTSNNRFNNNNSNNNNINNNNDN) are enriched in low complexity. A disordered region spans residues 150-187 (TTTATTSNNRFNNNNSNNNNINNNNDNNNKEQKKESRC). The segment covering 177 to 187 (NNKEQKKESRC) has biased composition (basic and acidic residues).

This is an uncharacterized protein from Dictyostelium discoideum (Social amoeba).